Here is a 417-residue protein sequence, read N- to C-terminus: D-amino acid dehydrogenase (417 aa).

3–17 (VVILGSGVVGVSTAW) provides a ligand contact to FAD.

The protein belongs to the DadA oxidoreductase family. FAD is required as a cofactor.

The enzyme catalyses a D-alpha-amino acid + A + H2O = a 2-oxocarboxylate + AH2 + NH4(+). The protein operates within amino-acid degradation; D-alanine degradation; NH(3) and pyruvate from D-alanine: step 1/1. In terms of biological role, oxidative deamination of D-amino acids. In Pectobacterium carotovorum subsp. carotovorum (strain PC1), this protein is D-amino acid dehydrogenase.